An 828-amino-acid polypeptide reads, in one-letter code: G-type lectin S-receptor-like serine/threonine-protein kinase At2g19130 (828 aa).

A signal peptide spans 1–22 (MVSFLTLTSFFFICFFIHGSSA). Positions 23 to 146 (VDTISGDFTL…GSSLSANVLW (124 aa)) constitute a Bulb-type lectin domain. Residues 23-439 (VDTISGDFTL…GASGKSNNKG (417 aa)) lie on the Extracellular side of the membrane. Residues N85, N113, N203, N234, N240, and N255 are each glycosylated (N-linked (GlcNAc...) asparagine). Residues 286–322 (PRQQCQVYRYCGSFGICSDKSEPFCRCPQGFRPMSQK) form the EGF-like domain. Intrachain disulfides connect C290-C302, C296-C310, C372-C394, and C376-C382. In terms of domain architecture, PAN spans 341 to 422 (CSRGDINQFF…EGNIFYLRLA (82 aa)). The chain crosses the membrane as a helical span at residues 440 to 460 (LIFGAVLGSLGVIVLVLLVVI). The Cytoplasmic segment spans residues 461-828 (LILRYRRRKR…KKMTNDNSSA (368 aa)). One can recognise a Protein kinase domain in the interval 493–770 (KNFSDKLGGG…QVVQILEGVL (278 aa)). Residues 499 to 507 (LGGGGFGSV) and K521 contribute to the ATP site. A Phosphoserine modification is found at S527. Residues 582–600 (VEEKIVLGWKLRFQIALGT) form a caM-binding region. The active-site Proton acceptor is D619. A Phosphothreonine modification is found at T653. The disordered stretch occupies residues 796 to 828 (ESSSSSSHNSSQNHKHSSSSSSSKKMTNDNSSA). The segment covering 797 to 828 (SSSSSSHNSSQNHKHSSSSSSSKKMTNDNSSA) has biased composition (low complexity). S815 carries the phosphoserine modification.

It belongs to the protein kinase superfamily. Ser/Thr protein kinase family.

Its subcellular location is the cell membrane. The catalysed reaction is L-seryl-[protein] + ATP = O-phospho-L-seryl-[protein] + ADP + H(+). It carries out the reaction L-threonyl-[protein] + ATP = O-phospho-L-threonyl-[protein] + ADP + H(+). The sequence is that of G-type lectin S-receptor-like serine/threonine-protein kinase At2g19130 from Arabidopsis thaliana (Mouse-ear cress).